The sequence spans 628 residues: MEPPDAPAQARGAPRLLLLAVLLAAHPDAQAEVRLSVPPLVEVMRGKSVILDCTPTGTHDHYMLEWFLTDRSGARPRLASAEMQGSELQVTMHDTRGRSPPYQLDSQGRLVLAEAQVGDERDYVCVVRAGAAGTAEATARLNVFAKPEATEVSPNKGTLSVMEDSAQEIATCNSRNGNPAPKITWYRNGQRLEVPVEMNPEGYMTSRTVREASGLLSLTSTLYLRLRKDDRDASFHCAAHYSLPEGRHGRLDSPTFHLTLHYPTEHVQFWVGSPSTPAGWVREGDTVQLLCRGDGSPSPEYTLFRLQDEQEEVLNVNLEGNLTLEGVTRGQSGTYGCRVEDYDAADDVQLSKTLELRVAYLDPLELSEGKVLSLPLNSSAVVNCSVHGLPTPALRWTKDSTPLGDGPMLSLSSITFDSNGTYVCEASLPTVPVLSRTQNFTLLVQGSPELKTAEIEPKADGSWREGDEVTLICSARGHPDPKLSWSQLGGSPAEPIPGRQGWVSSSLTLKVTSALSRDGISCEASNPHGNKRHVFHFGTVSPQTSQAGVAVMAVAVSVGLLLLVVAVFYCVRRKGGPCCRQRREKGAPPPGEPGLSHSGSEQPEQTGLLMGGASGGARGGSGGFGDEC.

An N-terminal signal peptide occupies residues 1–31 (MEPPDAPAQARGAPRLLLLAVLLAAHPDAQA). Ig-like V-type domains follow at residues 32–142 (EVRL…ARLN) and 147–257 (PEAT…PTFH). At 32–547 (EVRLSVPPLV…GTVSPQTSQA (516 aa)) the chain is on the extracellular side. Disulfide bonds link Cys-53–Cys-125, Cys-172–Cys-237, and Cys-291–Cys-337. Ig-like C2-type domains are found at residues 274–355 (PSTP…KTLE), 363–441 (PLEL…QNFT), and 448–541 (PELK…GTVS). The interval 309-312 (EQEE) is interaction with laminin alpha5. N-linked (GlcNAc...) asparagine glycosylation is found at Asn-321, Asn-377, Asn-383, Asn-419, and Asn-439. Cys-384 and Cys-424 are disulfide-bonded. Cysteines 473 and 522 form a disulfide. Residues 548–568 (GVAVMAVAVSVGLLLLVVAVF) traverse the membrane as a helical segment. Topologically, residues 569–628 (YCVRRKGGPCCRQRREKGAPPPGEPGLSHSGSEQPEQTGLLMGGASGGARGGSGGFGDEC) are cytoplasmic. A disordered region spans residues 579–628 (CRQRREKGAPPPGEPGLSHSGSEQPEQTGLLMGGASGGARGGSGGFGDEC). The residue at position 596 (Ser-596) is a Phosphoserine; by GSK3. Ser-598 is modified (phosphoserine; by CK2). Ser-600 is subject to Phosphoserine. The span at 609-628 (LMGGASGGARGGSGGFGDEC) shows a compositional bias: gly residues. Ser-621 carries the phosphoserine; by PKA or PKB/AKT1 modification.

Homodimer. Interacts with ITGA4:ITGB1. Interacts with spectrins SPTA1 and SPTB1. Post-translationally, epinephrine-stimulated phosphorylation of Ser-621 by PKA enhances adhesion to laminin. Ser-621 can also be phosphorylated by AKT1. As to expression, wide tissue distribution (highest in the pancreas and very low in brain). Closely associated with the basal layer of cells in epithelia and the endothelium of blood vessel walls.

It is found in the cell membrane. Its function is as follows. Transmembrane glycoprotein that functions as both a receptor and an adhesion molecule playing a crucial role in cell adhesion, motility, migration and invasion. Extracellular domain enables binding to extracellular matrix proteins, such as laminin, integrin and other ligands while its intracellular domain interacts with cytoskeletal proteins like hemoglobin, facilitating cell signal transduction. Serves as a receptor for laminin alpha-5/LAMA5 to promote cell adhesion. Mechanistically, JAK2 induces BCAM phosphorylation and activates its adhesion to laminin by stimulating a Rap1/AKT signaling pathway in the absence of EPOR. This chain is Basal cell adhesion molecule (BCAM), found in Homo sapiens (Human).